Consider the following 250-residue polypeptide: 5-oxoprolinase subunit A (250 aa).

This sequence belongs to the LamB/PxpA family. As to quaternary structure, forms a complex composed of PxpA, PxpB and PxpC.

It catalyses the reaction 5-oxo-L-proline + ATP + 2 H2O = L-glutamate + ADP + phosphate + H(+). Its function is as follows. Catalyzes the cleavage of 5-oxoproline to form L-glutamate coupled to the hydrolysis of ATP to ADP and inorganic phosphate. The protein is 5-oxoprolinase subunit A of Staphylococcus aureus (strain MW2).